Consider the following 471-residue polypeptide: Tryptophanase (471 aa).

3 positions are modified to N6-acetyllysine: lysine 5, lysine 115, and lysine 156. Lysine 270 bears the N6-(pyridoxal phosphate)lysine mark. Lysine 450 is subject to N6-acetyllysine.

This sequence belongs to the beta-eliminating lyase family. As to quaternary structure, homotetramer. It depends on pyridoxal 5'-phosphate as a cofactor.

The enzyme catalyses L-tryptophan + H2O = indole + pyruvate + NH4(+). It participates in amino-acid degradation; L-tryptophan degradation via pyruvate pathway; indole and pyruvate from L-tryptophan: step 1/1. This Escherichia coli O6:H1 (strain CFT073 / ATCC 700928 / UPEC) protein is Tryptophanase.